The following is a 603-amino-acid chain: Adenine deaminase (603 aa).

Belongs to the metallo-dependent hydrolases superfamily. Adenine deaminase family. In terms of assembly, homodimer. It depends on Mn(2+) as a cofactor.

It catalyses the reaction adenine + H2O + H(+) = hypoxanthine + NH4(+). The polypeptide is Adenine deaminase (Klebsiella pneumoniae (strain 342)).